The following is a 110-amino-acid chain: uncharacterized protein (110 aa).

A run of 3 helical transmembrane segments spans residues 4–26 (LVGGGLMIIAGILIKLFPPKSIN), 46–68 (ANRYSASLMILSGLVIAGMGLLL), and 72–91 (LFILQLILLIAACVITFMLT).

Its subcellular location is the cell membrane. This is an uncharacterized protein from Bacillus subtilis (strain 168).